Reading from the N-terminus, the 382-residue chain is Carbamoyl phosphate synthase small chain (382 aa).

Positions 1–189 (MIKSALLVLE…GLPEAKSEDD (189 aa)) are CPSase. Residues Ser-47 and Gly-241 each coordinate L-glutamine. Positions 193-380 (HVVAYDFGAK…IELIKHYRSS (188 aa)) constitute a Glutamine amidotransferase type-1 domain. The active-site Nucleophile is the Cys-269. Leu-270, Gln-273, Asn-311, Gly-313, and Phe-314 together coordinate L-glutamine. Catalysis depends on residues His-353 and Glu-355.

Belongs to the CarA family. Composed of two chains; the small (or glutamine) chain promotes the hydrolysis of glutamine to ammonia, which is used by the large (or ammonia) chain to synthesize carbamoyl phosphate. Tetramer of heterodimers (alpha,beta)4.

The enzyme catalyses hydrogencarbonate + L-glutamine + 2 ATP + H2O = carbamoyl phosphate + L-glutamate + 2 ADP + phosphate + 2 H(+). It catalyses the reaction L-glutamine + H2O = L-glutamate + NH4(+). The protein operates within amino-acid biosynthesis; L-arginine biosynthesis; carbamoyl phosphate from bicarbonate: step 1/1. It participates in pyrimidine metabolism; UMP biosynthesis via de novo pathway; (S)-dihydroorotate from bicarbonate: step 1/3. Small subunit of the glutamine-dependent carbamoyl phosphate synthetase (CPSase). CPSase catalyzes the formation of carbamoyl phosphate from the ammonia moiety of glutamine, carbonate, and phosphate donated by ATP, constituting the first step of 2 biosynthetic pathways, one leading to arginine and/or urea and the other to pyrimidine nucleotides. The small subunit (glutamine amidotransferase) binds and cleaves glutamine to supply the large subunit with the substrate ammonia. This chain is Carbamoyl phosphate synthase small chain, found in Salmonella typhi.